A 560-amino-acid polypeptide reads, in one-letter code: NADH-quinone oxidoreductase subunit C/D (560 aa).

An NADH dehydrogenase I subunit C region spans residues 2 to 157; that stretch reads NKLENLKQLL…NNQQACTNSL (156 aa). The NADH dehydrogenase I subunit D stretch occupies residues 175-560; the sequence is KYLPLNIGPS…MNLIAGELDR (386 aa).

In the N-terminal section; belongs to the complex I 30 kDa subunit family. It in the C-terminal section; belongs to the complex I 49 kDa subunit family. As to quaternary structure, NDH-1 is composed of 13 different subunits. Subunits NuoB, CD, E, F, and G constitute the peripheral sector of the complex.

It is found in the cytoplasm. The protein localises to the cell inner membrane. The catalysed reaction is a quinone + NADH + 5 H(+)(in) = a quinol + NAD(+) + 4 H(+)(out). NDH-1 shuttles electrons from NADH, via FMN and iron-sulfur (Fe-S) centers, to quinones in the respiratory chain. The immediate electron acceptor for the enzyme in this species is believed to be ubiquinone. Couples the redox reaction to proton translocation (for every two electrons transferred, four hydrogen ions are translocated across the cytoplasmic membrane), and thus conserves the redox energy in a proton gradient. This chain is NADH-quinone oxidoreductase subunit C/D, found in Bdellovibrio bacteriovorus (strain ATCC 15356 / DSM 50701 / NCIMB 9529 / HD100).